Consider the following 382-residue polypeptide: UDP-N-acetylglucosamine--N-acetylmuramyl-(pentapeptide) pyrophosphoryl-undecaprenol N-acetylglucosamine transferase (382 aa).

Residues 17 to 19, N137, R179, S213, and Q308 each bind UDP-N-acetyl-alpha-D-glucosamine; that span reads TAG.

This sequence belongs to the glycosyltransferase 28 family. MurG subfamily.

It localises to the cell membrane. It catalyses the reaction di-trans,octa-cis-undecaprenyl diphospho-N-acetyl-alpha-D-muramoyl-L-alanyl-D-glutamyl-meso-2,6-diaminopimeloyl-D-alanyl-D-alanine + UDP-N-acetyl-alpha-D-glucosamine = di-trans,octa-cis-undecaprenyl diphospho-[N-acetyl-alpha-D-glucosaminyl-(1-&gt;4)]-N-acetyl-alpha-D-muramoyl-L-alanyl-D-glutamyl-meso-2,6-diaminopimeloyl-D-alanyl-D-alanine + UDP + H(+). It participates in cell wall biogenesis; peptidoglycan biosynthesis. Its function is as follows. Cell wall formation. Catalyzes the transfer of a GlcNAc subunit on undecaprenyl-pyrophosphoryl-MurNAc-pentapeptide (lipid intermediate I) to form undecaprenyl-pyrophosphoryl-MurNAc-(pentapeptide)GlcNAc (lipid intermediate II). The chain is UDP-N-acetylglucosamine--N-acetylmuramyl-(pentapeptide) pyrophosphoryl-undecaprenol N-acetylglucosamine transferase from Rhodococcus opacus (strain B4).